A 498-amino-acid polypeptide reads, in one-letter code: Glycylpeptide N-tetradecanoyltransferase 2 (498 aa).

Residues 1 to 88 (MAEDSESAAS…QPSKNPSVPM (88 aa)) are disordered. Residues 15-32 (ELDDQDTCGIDGDNEEET) show a composition bias toward acidic residues. A Phosphoserine modification is found at Ser38. Over residues 45 to 57 (AKKKKKKQKRKKE) the composition is skewed to basic residues. Positions 61 to 86 (SGGTKSDSASDSQEIKIQQPSKNPSV) are enriched in polar residues. His117, Trp122, Leu250, Val252, Ser258, Arg260, Val261, and Ala262 together coordinate tetradecanoyl-CoA.

The protein belongs to the NMT family.

Its subcellular location is the cytoplasm. It is found in the membrane. It carries out the reaction N-terminal glycyl-[protein] + tetradecanoyl-CoA = N-tetradecanoylglycyl-[protein] + CoA + H(+). The enzyme catalyses N-terminal glycyl-L-lysyl-[protein] + tetradecanoyl-CoA = N-terminal glycyl-(N(6)-tetradecanoyl)-L-lysyl-[protein] + CoA + H(+). Functionally, adds a myristoyl group to the N-terminal glycine residue of certain cellular and viral proteins. Also able to mediate N-terminal lysine myristoylation of proteins: catalyzes myristoylation of ARF6 on both 'Gly-2' and 'Lys-3'. Lysine myristoylation is required to maintain ARF6 on membranes during the GTPase cycle. The sequence is that of Glycylpeptide N-tetradecanoyltransferase 2 from Homo sapiens (Human).